A 354-amino-acid chain; its full sequence is Sulfate/thiosulfate import ATP-binding protein CysA (354 aa).

Residues 3 to 237 (IEVRGLSKRF…PATPFVYGFL (235 aa)) enclose the ABC transporter domain. 35-42 (GPSGCGKT) lines the ATP pocket.

It belongs to the ABC transporter superfamily. Sulfate/tungstate importer (TC 3.A.1.6) family. As to quaternary structure, the complex is composed of two ATP-binding proteins (CysA), two transmembrane proteins (CysT and CysW) and a solute-binding protein (CysP).

The protein localises to the cell inner membrane. It carries out the reaction sulfate(out) + ATP + H2O = sulfate(in) + ADP + phosphate + H(+). The catalysed reaction is thiosulfate(out) + ATP + H2O = thiosulfate(in) + ADP + phosphate + H(+). Functionally, part of the ABC transporter complex CysAWTP involved in sulfate/thiosulfate import. Responsible for energy coupling to the transport system. In Bordetella parapertussis (strain 12822 / ATCC BAA-587 / NCTC 13253), this protein is Sulfate/thiosulfate import ATP-binding protein CysA.